The following is a 328-amino-acid chain: Neuropeptides B/W receptor type 1 (328 aa).

Residues M1–A37 are Extracellular-facing. Residues N3, N13, and N25 are each glycosylated (N-linked (GlcNAc...) asparagine). The helical transmembrane segment at V38 to V61 threads the bilayer. The Cytoplasmic portion of the chain corresponds to L62 to T72. The chain crosses the membrane as a helical span at residues N73–F97. The Extracellular portion of the chain corresponds to L98–I112. C109 and C188 are disulfide-bonded. Residues V113–A132 traverse the membrane as a helical segment. Over D133–A157 the chain is Cytoplasmic. The helical transmembrane segment at V158–A177 threads the bilayer. The Extracellular portion of the chain corresponds to R178–A202. Residues S203–T224 form a helical membrane-spanning segment. The Cytoplasmic portion of the chain corresponds to T225–R248. The chain crosses the membrane as a helical span at residues V249–V273. The Extracellular portion of the chain corresponds to A274–P283. A helical membrane pass occupies residues L284–A298. Residues N299 to A328 lie on the Cytoplasmic side of the membrane.

This sequence belongs to the G-protein coupled receptor 1 family. Found in cerebellum and frontal cortex. Detected at high levels in hippocampus, amygdala and trachea; at moderate levels in fetal brain, pituitary gland and prostate. Not in caudate, accumbens, kidney or liver. Also detected at high levels in lung carcinoma.

It localises to the cell membrane. Interacts specifically with a number of opioid ligands. Receptor for neuropeptides B and W, which may be involved in neuroendocrine system regulation, food intake and the organization of other signals. Has a higher affinity for neuropeptide B. The chain is Neuropeptides B/W receptor type 1 (NPBWR1) from Homo sapiens (Human).